A 255-amino-acid chain; its full sequence is Pyrroloquinoline-quinone synthase (255 aa).

It belongs to the PqqC family.

It catalyses the reaction 6-(2-amino-2-carboxyethyl)-7,8-dioxo-1,2,3,4,7,8-hexahydroquinoline-2,4-dicarboxylate + 3 O2 = pyrroloquinoline quinone + 2 H2O2 + 2 H2O + H(+). It participates in cofactor biosynthesis; pyrroloquinoline quinone biosynthesis. Its function is as follows. Ring cyclization and eight-electron oxidation of 3a-(2-amino-2-carboxyethyl)-4,5-dioxo-4,5,6,7,8,9-hexahydroquinoline-7,9-dicarboxylic-acid to PQQ. This is Pyrroloquinoline-quinone synthase from Granulibacter bethesdensis (strain ATCC BAA-1260 / CGDNIH1).